The sequence spans 381 residues: Protein palisade (381 aa).

The N-terminal stretch at 1 to 25 is a signal peptide; sequence MMMHSRNRSWTLTLLALGVVLATSA. 6 tandem repeats follow at residues 190–199, 200–209, 210–219, 220–229, 230–239, and 247–256. Residues 190–256 are 6 X 10 AA approximate tandem repeats of P-[AP]-A-P-A-Y-E-[AP]-P-[AT]; that stretch reads PAAPAYEAPA…PPAPAYEPPA (67 aa). Disordered regions lie at residues 236-270 and 309-329; these read EAPTTDYSAPAPPAPAYEPPASSYTQGYSQPAQPS and TPTAPPPPPPPAPVYEAPSQN. Over residues 311-321 the composition is skewed to pro residues; that stretch reads TAPPPPPPPAP.

Post-translationally, sulfated by pip; may be involved in embryo dorsal-ventral axis determination. Sulfation by pip may occur on covalently bound glycosaminoglycans. In terms of processing, may undergo both disulfide and non-disulfide cross-linking upon incorporation into the vitelline membrane. Present in the perivitelline space of stage 10 egg chambers and in the vitelline membrane adjacent to the oocyte in stage 13 and 14 egg chambers (at protein level).

Its subcellular location is the secreted. It is found in the extracellular space. It localises to the extracellular matrix. Functionally, minor protein component of the vitelline membrane. Involved in vitelline membrane biogenesis during late stages of oogenesis. Required for efficient disulfide and non-disulfide cross-linking of several vitelline membrane components. The chain is Protein palisade from Drosophila melanogaster (Fruit fly).